A 261-amino-acid polypeptide reads, in one-letter code: 4-hydroxy-tetrahydrodipicolinate reductase (261 aa).

Residue glycine 8–methionine 13 coordinates NAD(+). Residue arginine 36 participates in NADP(+) binding. NAD(+) is bound by residues glycine 95–threonine 97 and alanine 121–phenylalanine 124. Catalysis depends on histidine 151, which acts as the Proton donor/acceptor. Histidine 152 lines the (S)-2,3,4,5-tetrahydrodipicolinate pocket. The active-site Proton donor is lysine 155. Glycine 161–threonine 162 provides a ligand contact to (S)-2,3,4,5-tetrahydrodipicolinate.

This sequence belongs to the DapB family.

It localises to the cytoplasm. The catalysed reaction is (S)-2,3,4,5-tetrahydrodipicolinate + NAD(+) + H2O = (2S,4S)-4-hydroxy-2,3,4,5-tetrahydrodipicolinate + NADH + H(+). It carries out the reaction (S)-2,3,4,5-tetrahydrodipicolinate + NADP(+) + H2O = (2S,4S)-4-hydroxy-2,3,4,5-tetrahydrodipicolinate + NADPH + H(+). It functions in the pathway amino-acid biosynthesis; L-lysine biosynthesis via DAP pathway; (S)-tetrahydrodipicolinate from L-aspartate: step 4/4. Catalyzes the conversion of 4-hydroxy-tetrahydrodipicolinate (HTPA) to tetrahydrodipicolinate. This Lactiplantibacillus plantarum (strain ATCC BAA-793 / NCIMB 8826 / WCFS1) (Lactobacillus plantarum) protein is 4-hydroxy-tetrahydrodipicolinate reductase.